Consider the following 266-residue polypeptide: Gap junction beta-4 protein (266 aa).

An intramembrane segment occupies 2 to 13; the sequence is NWAFLQGLLSGV. The Cytoplasmic segment spans residues 14 to 20; the sequence is NKYSTVL. A helical membrane pass occupies residues 21–40; it reads SRIWLSVVFIFRVLVYVVAA. At 41–73 the chain is on the extracellular side; sequence EEVWDDEQKDFVCNTKQPGCPNVCYDEFFPVSH. Intrachain disulfides connect Cys-53/Cys-175, Cys-60/Cys-169, and Cys-64/Cys-164. The chain crosses the membrane as a helical span at residues 74 to 94; that stretch reads VRLWALQLILVTCPSLLVVMH. The Cytoplasmic segment spans residues 95–130; it reads VAYREERERKHHLKHGPNAPSLYDNLSKKRGGLWWT. A helical transmembrane segment spans residues 131–151; the sequence is YLLSLIFKAAVDAGFLYIFHR. Residues 152-184 lie on the Extracellular side of the membrane; it reads LYKDYDMPRVVACSVEPCPHTVDCYISRPTEKK. Residues 185 to 205 traverse the membrane as a helical segment; that stretch reads VFTYFMVTTAAICILLNLSEV. The Cytoplasmic segment spans residues 206 to 266; it reads FYLVGKRCME…SAPVDAGGYP (61 aa).

The protein belongs to the connexin family. Beta-type (group I) subfamily. In terms of assembly, a hemichannel or connexon is composed of a hexamer of connexins. A functional gap junction is formed by the apposition of two hemichannels. Forms heteromeric channels with GJB2.

It localises to the cell membrane. It is found in the cell junction. Its subcellular location is the gap junction. In terms of biological role, structural component of gap junctions. Gap junctions are dodecameric channels that connect the cytoplasm of adjoining cells. They are formed by the docking of two hexameric hemichannels, one from each cell membrane. Small molecules and ions diffuse from one cell to a neighboring cell via the central pore. The protein is Gap junction beta-4 protein (GJB4) of Homo sapiens (Human).